Reading from the N-terminus, the 377-residue chain is N-acetyldiaminopimelate deacetylase (377 aa).

Asp-70 is a catalytic residue. The Proton acceptor role is filled by Glu-129.

It belongs to the peptidase M20A family. N-acetyldiaminopimelate deacetylase subfamily.

It carries out the reaction N-acetyl-(2S,6S)-2,6-diaminopimelate + H2O = (2S,6S)-2,6-diaminopimelate + acetate. It functions in the pathway amino-acid biosynthesis; L-lysine biosynthesis via DAP pathway; LL-2,6-diaminopimelate from (S)-tetrahydrodipicolinate (acetylase route): step 3/3. Its function is as follows. Catalyzes the conversion of N-acetyl-diaminopimelate to diaminopimelate and acetate. This Streptococcus thermophilus (strain ATCC BAA-491 / LMD-9) protein is N-acetyldiaminopimelate deacetylase.